The sequence spans 439 residues: Protein disulfide-isomerase A6 (439 aa).

An N-terminal signal peptide occupies residues 1-19 (MARLGFGLVSCTFFLAASG). 2 Thioredoxin domains span residues 20–133 (LYSS…ALRQ) and 151–287 (QGRG…EDVA). Active-site nucleophile residues include Cys-55 and Cys-58. Cys-55 and Cys-58 form a disulfide bridge. 3 positions are modified to phosphoserine: Ser-129, Ser-156, and Ser-158. The segment at 141 to 160 (GRSGGYSSGKQGRGDSSSKK) is disordered. Residues Cys-190 and Cys-193 each act as nucleophile in the active site. An intrachain disulfide couples Cys-190 to Cys-193. The disordered stretch occupies residues 400 to 425 (GSFPAITAREPWDGRDGELPVEDDID). Ser-427 carries the phosphoserine modification. The short motif at 436-439 (KDEL) is the Prevents secretion from ER element.

This sequence belongs to the protein disulfide isomerase family. As to quaternary structure, part of a large chaperone multiprotein complex comprising DNAJB11, HSP90B1, HSPA5, HYOU, PDIA2, PDIA4, PDIA6, PPIB, SDF2L1, UGGT1 and very small amounts of ERP29, but not, or at very low levels, CALR nor CANX. Interacts with MICA on the surface of tumor cells, leading to MICA disulfide bond reduction which is required for its release from tumor cells. Interacts with ITGB3 following platelet stimulation. Interacts with ERN1; the interaction is direct. Interacts with EIF2AK3. Expressed most abundantly in lung and kidney, followed by heart, liver and brain.

It localises to the endoplasmic reticulum lumen. It is found in the cell membrane. The protein localises to the melanosome. The catalysed reaction is Catalyzes the rearrangement of -S-S- bonds in proteins.. Functionally, may function as a chaperone that inhibits aggregation of misfolded proteins. Negatively regulates the unfolded protein response (UPR) through binding to UPR sensors such as ERN1, which in turn inactivates ERN1 signaling. May also regulate the UPR via the EIF2AK3 UPR sensor. Plays a role in platelet aggregation and activation by agonists such as convulxin, collagen and thrombin. This chain is Protein disulfide-isomerase A6 (PDIA6), found in Mesocricetus auratus (Golden hamster).